Here is a 488-residue protein sequence, read N- to C-terminus: MSDFIASKEDDYSKWYLDIVQKAKLADYSPVKGCMVIMPYGYSIWSKIQSILDKKFKETGHENAYFPMLIPYSFLEREKDHIDGFSPEFAIIKDAGGESLAEPLVLRPTSETIIWNMYSKWIKSYRDLPLKINQWANVVRWEKRTRPFLRTTEFLWQEGHTAHATEEEALEETLLILDVYKRFIEDYLAIPVFCGKKSEKEKFAGAVSTYSIEALMQDKKALQAATSHYLGLNFAKAFDVKFQDKDGKMRHVFASSWGVSTRLIGALIMVHSDEKGLVLPPRIAPIEIIVIPIFKKEDEINKKILDYSDCVVDALKKAEFRVEIDKDVRSSPGFRFSSAEFKGIPIRLEVGINDVLLNSVTISRRDKDRKFKYQISLDSLISKVKVELDLMQKDLFQRALNFRILNTKEIFRSSKDSYETFKAYVNDYSGFVLSCWCGSLNCENIIKNETKATIRCIPDDFKARDLTGMTCIYCSSKAKYFVLFAKSY.

This sequence belongs to the class-II aminoacyl-tRNA synthetase family. ProS type 3 subfamily. In terms of assembly, homodimer.

Its subcellular location is the cytoplasm. It catalyses the reaction tRNA(Pro) + L-proline + ATP = L-prolyl-tRNA(Pro) + AMP + diphosphate. In terms of biological role, catalyzes the attachment of proline to tRNA(Pro) in a two-step reaction: proline is first activated by ATP to form Pro-AMP and then transferred to the acceptor end of tRNA(Pro). Can inadvertently accommodate and process cysteine. This chain is Proline--tRNA ligase (proS), found in Borreliella burgdorferi (strain ATCC 35210 / DSM 4680 / CIP 102532 / B31) (Borrelia burgdorferi).